Consider the following 565-residue polypeptide: Oxygen-dependent choline dehydrogenase (565 aa).

7–36 lines the FAD pocket; the sequence is DYIICGAGSAGNVLATRLTEDPGVTVLLLE. The active-site Proton acceptor is the His474.

This sequence belongs to the GMC oxidoreductase family. It depends on FAD as a cofactor.

The catalysed reaction is choline + A = betaine aldehyde + AH2. It catalyses the reaction betaine aldehyde + NAD(+) + H2O = glycine betaine + NADH + 2 H(+). The protein operates within amine and polyamine biosynthesis; betaine biosynthesis via choline pathway; betaine aldehyde from choline (cytochrome c reductase route): step 1/1. Involved in the biosynthesis of the osmoprotectant glycine betaine. Catalyzes the oxidation of choline to betaine aldehyde and betaine aldehyde to glycine betaine at the same rate. This chain is Oxygen-dependent choline dehydrogenase, found in Burkholderia pseudomallei (strain K96243).